Reading from the N-terminus, the 273-residue chain is 4-hydroxy-tetrahydrodipicolinate reductase (273 aa).

Residue 12 to 17 (GANGRM) participates in NAD(+) binding. Arg39 serves as a coordination point for NADP(+). Residues 102–104 (GTT) and 126–129 (AANF) contribute to the NAD(+) site. His159 acts as the Proton donor/acceptor in catalysis. Residue His160 coordinates (S)-2,3,4,5-tetrahydrodipicolinate. Lys163 acts as the Proton donor in catalysis. Residue 169-170 (GT) participates in (S)-2,3,4,5-tetrahydrodipicolinate binding.

The protein belongs to the DapB family. In terms of assembly, homotetramer.

Its subcellular location is the cytoplasm. It catalyses the reaction (S)-2,3,4,5-tetrahydrodipicolinate + NAD(+) + H2O = (2S,4S)-4-hydroxy-2,3,4,5-tetrahydrodipicolinate + NADH + H(+). The enzyme catalyses (S)-2,3,4,5-tetrahydrodipicolinate + NADP(+) + H2O = (2S,4S)-4-hydroxy-2,3,4,5-tetrahydrodipicolinate + NADPH + H(+). Its pathway is amino-acid biosynthesis; L-lysine biosynthesis via DAP pathway; (S)-tetrahydrodipicolinate from L-aspartate: step 4/4. Functionally, catalyzes the conversion of 4-hydroxy-tetrahydrodipicolinate (HTPA) to tetrahydrodipicolinate. This Cronobacter sakazakii (strain ATCC BAA-894) (Enterobacter sakazakii) protein is 4-hydroxy-tetrahydrodipicolinate reductase.